Here is a 113-residue protein sequence, read N- to C-terminus: Large ribosomal subunit protein eL30 (113 aa).

It belongs to the eukaryotic ribosomal protein eL30 family.

The protein is Large ribosomal subunit protein eL30 (RpL30) of Spodoptera frugiperda (Fall armyworm).